Reading from the N-terminus, the 243-residue chain is Ribosomal RNA small subunit methyltransferase J (243 aa).

Residues 112–113 and Asp-164 each bind S-adenosyl-L-methionine; that span reads ER.

This sequence belongs to the methyltransferase superfamily. RsmJ family.

The protein localises to the cytoplasm. The catalysed reaction is guanosine(1516) in 16S rRNA + S-adenosyl-L-methionine = N(2)-methylguanosine(1516) in 16S rRNA + S-adenosyl-L-homocysteine + H(+). Its function is as follows. Specifically methylates the guanosine in position 1516 of 16S rRNA. This Legionella pneumophila (strain Lens) protein is Ribosomal RNA small subunit methyltransferase J.